The sequence spans 144 residues: MSFTTCLIVMVGGALGTLARYLVSVAAMPISRFIPWGTILPINALGSFVIGFFGTLTLADGRYPVSENMRLFVMIGLCGGYTTFSSFSLQTLDLIRNDAWGRASVNVAASVILCIGAVALGHITADGFNTGAIRIAQTATEEDA.

4 consecutive transmembrane segments (helical) span residues 7–27, 33–53, 71–91, and 105–125; these read LIVM…SVAA, FIPW…IGFF, LFVM…SLQT, and VNVA…HITA. Na(+)-binding residues include glycine 79 and threonine 82.

It belongs to the fluoride channel Fluc/FEX (TC 1.A.43) family.

It is found in the cell inner membrane. The catalysed reaction is fluoride(in) = fluoride(out). With respect to regulation, na(+) is not transported, but it plays an essential structural role and its presence is essential for fluoride channel function. Fluoride-specific ion channel. Important for reducing fluoride concentration in the cell, thus reducing its toxicity. The chain is Fluoride-specific ion channel FluC from Gluconobacter oxydans (strain 621H) (Gluconobacter suboxydans).